We begin with the raw amino-acid sequence, 352 residues long: MSDTLPLLLRAARGESVERPPVWMMRQAGRYMKIYRDLRDKYPSFRERSENPDLSYEISMQPFEAFQPDGVILFSDILTPLPGMGIDFDIIESKGPQIGDPIRSMEQVKALRPLNPAESMPFVGEVLGRLRKTVGNQAAVLGFVGAPWTLAAYVVEGKSSKNYAVIKAMAFREPELLHTLLNHFAESIANYLRYQIDSGAQVVQMFDSWAGQLSPADYDTFAAPYQKKVVDLVKQTHPDTPFVLYISGSAGVLERMARTGVDIISLDWTVDMAEACARLPEHIGVQGNVDPGLLFGTPDAIQARIDDTVRKARGRRHILNLGHGILPGTPEENGAAFFRSGKSVMDRIGTLA.

Residues 26 to 30 (RQAGR), Asp-76, Tyr-153, Ser-208, and His-323 contribute to the substrate site.

The protein belongs to the uroporphyrinogen decarboxylase family. Homodimer.

The protein localises to the cytoplasm. The catalysed reaction is uroporphyrinogen III + 4 H(+) = coproporphyrinogen III + 4 CO2. It participates in porphyrin-containing compound metabolism; protoporphyrin-IX biosynthesis; coproporphyrinogen-III from 5-aminolevulinate: step 4/4. In terms of biological role, catalyzes the decarboxylation of four acetate groups of uroporphyrinogen-III to yield coproporphyrinogen-III. The sequence is that of Uroporphyrinogen decarboxylase from Synechococcus sp. (strain CC9902).